The sequence spans 384 residues: ATP phosphoribosyltransferase regulatory subunit (384 aa).

This sequence belongs to the class-II aminoacyl-tRNA synthetase family. HisZ subfamily. As to quaternary structure, heteromultimer composed of HisG and HisZ subunits.

The protein resides in the cytoplasm. It participates in amino-acid biosynthesis; L-histidine biosynthesis; L-histidine from 5-phospho-alpha-D-ribose 1-diphosphate: step 1/9. Its function is as follows. Required for the first step of histidine biosynthesis. May allow the feedback regulation of ATP phosphoribosyltransferase activity by histidine. The polypeptide is ATP phosphoribosyltransferase regulatory subunit (Rhodospirillum rubrum (strain ATCC 11170 / ATH 1.1.1 / DSM 467 / LMG 4362 / NCIMB 8255 / S1)).